Reading from the N-terminus, the 85-residue chain is Small ribosomal subunit protein uS17 (85 aa).

It belongs to the universal ribosomal protein uS17 family. As to quaternary structure, part of the 30S ribosomal subunit.

Its function is as follows. One of the primary rRNA binding proteins, it binds specifically to the 5'-end of 16S ribosomal RNA. The sequence is that of Small ribosomal subunit protein uS17 from Natranaerobius thermophilus (strain ATCC BAA-1301 / DSM 18059 / JW/NM-WN-LF).